Here is a 137-residue protein sequence, read N- to C-terminus: 2-iminobutanoate/2-iminopropanoate deaminase (137 aa).

Ser-2 carries the post-translational modification N-acetylserine. Residues Lys-13, Lys-60, and Lys-67 each carry the N6-succinyllysine modification. Thr-74 carries the post-translational modification Phosphothreonine.

It belongs to the RutC family. In terms of assembly, homotrimer. Interacts with YTHDF2. Liver and kidney.

It localises to the cytoplasm. It is found in the nucleus. Its subcellular location is the peroxisome. The protein resides in the mitochondrion. The enzyme catalyses 2-iminobutanoate + H2O = 2-oxobutanoate + NH4(+). It catalyses the reaction 2-iminopropanoate + H2O = pyruvate + NH4(+). Catalyzes the hydrolytic deamination of enamine/imine intermediates that form during the course of normal metabolism. May facilitate the release of ammonia from these potentially toxic reactive metabolites, reducing their impact on cellular components. It may act on enamine/imine intermediates formed by several types of pyridoxal-5'-phosphate-dependent dehydratases including L-threonine dehydratase. Functionally, also promotes endoribonucleolytic cleavage of some transcripts by promoting recruitment of the ribonuclease P/MRP complex. Acts by bridging YTHDF2 and the ribonuclease P/MRP complex. RIDA/HRSP12 binds to N6-methyladenosine (m6A)-containing mRNAs containing a 5'-GGUUC-3' motif: cooperative binding of RIDA/HRSP12 and YTHDF2 to such transcripts lead to recruitment of the ribonuclease P/MRP complex and subsequent endoribonucleolytic cleavage. The sequence is that of 2-iminobutanoate/2-iminopropanoate deaminase from Rattus norvegicus (Rat).